Reading from the N-terminus, the 131-residue chain is Large ribosomal subunit protein bL17 (131 aa).

Belongs to the bacterial ribosomal protein bL17 family. Part of the 50S ribosomal subunit. Contacts protein L32.

This chain is Large ribosomal subunit protein bL17, found in Methylacidiphilum infernorum (isolate V4) (Methylokorus infernorum (strain V4)).